A 343-amino-acid polypeptide reads, in one-letter code: Transmembrane protein 120A (343 aa).

Residues 1 to 132 (MQPPPPGPLG…KQAKFAYKDE (132 aa)) lie on the Cytoplasmic side of the membrane. K130 is a CoA binding site. Residues 133 to 152 (YEKFKLYLTIILILISFTCR) traverse the membrane as a helical segment. Residues 153 to 158 (FLLNSR) are Extracellular-facing. A helical membrane pass occupies residues 159–177 (VTDAAFNFLLVWYYCTLTI). The Cytoplasmic segment spans residues 178–190 (RESILINNGSRIK). CoA-binding residues include S187 and R188. The helical transmembrane segment at 191–209 (GWWVFHHYVSTFLSGVMLT) threads the bilayer. Residues 210-218 (WPDGLMYQK) are Extracellular-facing. The chain crosses the membrane as a helical span at residues 219–240 (FRNQFLSFSMYQSFVQFLQYYY). Residues Q237, Y240, Q241, and H283 each contribute to the CoA site. The Cytoplasmic portion of the chain corresponds to 241 to 270 (QSGCLYRLRALGERHTMDLTVEGFQSWMWR). The chain crosses the membrane as a helical span at residues 271 to 294 (GLTFLLPFLFFGHFWQLFNALTLF). Residues 295-304 (NLAQDPQCKE) lie on the Extracellular side of the membrane. A helical membrane pass occupies residues 305 to 330 (WQVLMCGFPFLLLFLGNFFTTLRVVH). Topologically, residues 331 to 343 (HKFHSQRHGSKKD) are cytoplasmic. K332 provides a ligand contact to CoA.

It belongs to the TMEM120 family. In terms of assembly, homodimer. Forms heterooligomer with TMEM120B. Interacts with PKD2; TMEM120A inhibits PKD2 channel activity through the physical association of PKD2 with TMEM120A. Interacts (via C-terminal domain) with STING1; regulates the trafficking of STING1 from the ER to the ER-Golgi intermediate compartment to elicit antiviral effects. As to expression, expressed in nociceptors.

It is found in the cell membrane. The protein localises to the nucleus inner membrane. It localises to the endoplasmic reticulum. In terms of biological role, multifunctional protein involved in mechanosensation, and plays an essential role in lipid metabolism and adipocyte differentiation. May function as a potential ion channel involved in sensing mechanical stimuli. Mediates the mechanosensitivity of the PKD2-TMEM120A channel complex through direct physical interaction. TMEM120A seems to affect mechanosensation by inhibiting PIEZO2 channels, possibly by altering cellular lipid content. TMEM120A is structurally similar to a lipid-modifying enzyme, ELOVL7, and contains a bound coenzyme A molecule, which suggests it might function as an enzyme in lipid metabolism. Additionnaly, implicated in innate immune response against Zika virus. Acts as a key activator of the antiviral signaling involving STING1. This is Transmembrane protein 120A from Homo sapiens (Human).